Here is a 73-residue protein sequence, read N- to C-terminus: Large ribosomal subunit protein bL31 (73 aa).

Residues Cys-16, Cys-18, Cys-36, and Cys-39 each contribute to the Zn(2+) site.

Belongs to the bacterial ribosomal protein bL31 family. Type A subfamily. As to quaternary structure, part of the 50S ribosomal subunit. It depends on Zn(2+) as a cofactor.

In terms of biological role, binds the 23S rRNA. The sequence is that of Large ribosomal subunit protein bL31 from Desulfotalea psychrophila (strain LSv54 / DSM 12343).